The chain runs to 79 residues: Sec-independent protein translocase protein TatA (79 aa).

The chain crosses the membrane as a helical span at residues 1–21 (MGGFTSIWHWVIVLLVIVLLF). Residues 48-79 (EEEAKNEPKTLDAQVAQTKVHETSEIKSKQES) are disordered. The segment covering 66-79 (KVHETSEIKSKQES) has biased composition (basic and acidic residues).

This sequence belongs to the TatA/E family. The Tat system comprises two distinct complexes: a TatABC complex, containing multiple copies of TatA, TatB and TatC subunits, and a separate TatA complex, containing only TatA subunits. Substrates initially bind to the TatABC complex, which probably triggers association of the separate TatA complex to form the active translocon.

It is found in the cell inner membrane. Functionally, part of the twin-arginine translocation (Tat) system that transports large folded proteins containing a characteristic twin-arginine motif in their signal peptide across membranes. TatA could form the protein-conducting channel of the Tat system. The polypeptide is Sec-independent protein translocase protein TatA (Helicobacter pylori (strain Shi470)).